A 275-amino-acid chain; its full sequence is Seminase (275 aa).

The signal sequence occupies residues 1–19 (MKRLLFLFLLAGILINNHA). Residue Asn-23 is glycosylated (N-linked (GlcNAc...) asparagine). One can recognise a Peptidase S1 domain in the interval 44-268 (VIGGRVTTNA…VKPFIVKGIK (225 aa)). An intrachain disulfide couples Cys-70 to Cys-86. Residues His-85 and Asp-131 each act as charge relay system in the active site. Disulfide bonds link Cys-194-Cys-210 and Cys-220-Cys-244. The Charge relay system role is filled by Ser-224.

The protein belongs to the peptidase S1 family. Post-translationally, undergoes cleavage in the male during mating with a cleaved product detected in the ejaculatory duct and/or bulb of males by 8-10 minutes after the start of mating. Further cleavage occurs in the mated female. As to expression, produced in the male accessory glands and secreted into seminal fluid.

The protein localises to the secreted. Its function is as follows. Seminal fluid protease which is required for cleavage and probably also activation of the metalloprotease Semp1. Also required for a number of female post-mating responses independent of Semp1 including egg laying and sperm usage. The protein is Seminase of Drosophila melanogaster (Fruit fly).